A 503-amino-acid chain; its full sequence is Maturase K (503 aa).

This sequence belongs to the intron maturase 2 family. MatK subfamily.

The protein localises to the plastid. The protein resides in the chloroplast. Its function is as follows. Usually encoded in the trnK tRNA gene intron. Probably assists in splicing its own and other chloroplast group II introns. This chain is Maturase K, found in Actinodium cunninghamii (Albany daisy).